The sequence spans 124 residues: Ragulator complex protein LAMTOR3 (124 aa).

A required for interaction with LAMTOR2 region spans residues 57-70 (TDQGSKLGLSKNKS).

Belongs to the LAMTOR3 family. As to quaternary structure, part of the Ragulator complex composed of LAMTOR1, LAMTOR2, LAMTOR3, LAMTOR4 and LAMTOR5. LAMTOR4 and LAMTOR5 form a heterodimer that interacts, through LAMTOR1, with a LAMTOR2, LAMTOR3 heterodimer. Interacts with LAMTOR1 and LAMTOR2; the interaction is direct. The Ragulator complex interacts with both the mTORC1 complex and heterodimers constituted of the Rag GTPases RagA/RRAGA, RagB/RRAGB, RagC/RRAGC and RagD/RRAGD; regulated by amino acid availability. The Ragulator complex interacts with SLC38A9; the probable amino acid sensor. Component of the lysosomal folliculin complex (LFC), composed of FLCN, FNIP1 (or FNIP2), RagA/RRAGA or RagB/RRAGB GDP-bound, RagC/RRAGC or RagD/RRAGD GTP-bound, and Ragulator. Interacts with MAP2K1/MEK1 and MAPK2. Interacts with MORG1.

The protein resides in the late endosome membrane. As part of the Ragulator complex it is involved in amino acid sensing and activation of mTORC1, a signaling complex promoting cell growth in response to growth factors, energy levels, and amino acids. Activated by amino acids through a mechanism involving the lysosomal V-ATPase, the Ragulator plays a dual role for the small GTPases Rag (RagA/RRAGA, RagB/RRAGB, RagC/RRAGC and/or RagD/RRAGD): it (1) acts as a guanine nucleotide exchange factor (GEF), activating the small GTPases Rag and (2) mediates recruitment of Rag GTPases to the lysosome membrane. Activated Ragulator and Rag GTPases function as a scaffold recruiting mTORC1 to lysosomes where it is in turn activated. Adapter protein that enhances the efficiency of the MAP kinase cascade facilitating the activation of MAPK2. This is Ragulator complex protein LAMTOR3 from Homo sapiens (Human).